Consider the following 150-residue polypeptide: Endoribonuclease YbeY (150 aa).

The Zn(2+) site is built by His-112, His-116, and Asp-122.

Belongs to the endoribonuclease YbeY family. It depends on Zn(2+) as a cofactor.

It localises to the cytoplasm. Its function is as follows. Single strand-specific metallo-endoribonuclease involved in late-stage 70S ribosome quality control and in maturation of the 3' terminus of the 16S rRNA. In Protochlamydia amoebophila (strain UWE25), this protein is Endoribonuclease YbeY.